Consider the following 485-residue polypeptide: uncharacterized protein (485 aa).

Residues Met1–Thr23 form the signal peptide. Cys24 is lipidated: N-palmitoyl cysteine. Residue Cys24 is the site of S-diacylglycerol cysteine attachment. A compositionally biased stretch (low complexity) spans Ser308 to Ser327. A disordered region spans residues Ser308–Gly331.

Belongs to the TP013X lipoprotein family.

It localises to the cell membrane. This is an uncharacterized protein from Treponema pallidum (strain Nichols).